Here is a 129-residue protein sequence, read N- to C-terminus: UPF0325 protein YPTS_3127 (129 aa).

This sequence belongs to the UPF0325 family.

In Yersinia pseudotuberculosis serotype IB (strain PB1/+), this protein is UPF0325 protein YPTS_3127.